A 253-amino-acid chain; its full sequence is uncharacterized protein (253 aa).

Positions 1 to 19 (MRYLKRITIYISLLILVSG) are cleaved as a signal peptide. C20 is lipidated: N-palmitoyl cysteine. The S-diacylglycerol cysteine moiety is linked to residue C20.

It belongs to the staphylococcal tandem lipoprotein family.

The protein localises to the cell membrane. This is an uncharacterized protein from Staphylococcus epidermidis (strain ATCC 12228 / FDA PCI 1200).